Here is a 411-residue protein sequence, read N- to C-terminus: Argininosuccinate synthase (411 aa).

Residue 11 to 19 (AYSGGLDTS) participates in ATP binding. Residue Tyr88 coordinates L-citrulline. Gly118 is an ATP binding site. The L-aspartate site is built by Thr120, Asn124, and Asp125. Asn124 is an L-citrulline binding site. L-citrulline contacts are provided by Arg128, Ser176, Glu261, and Tyr273.

The protein belongs to the argininosuccinate synthase family. Type 1 subfamily. Homotetramer.

The protein resides in the cytoplasm. The enzyme catalyses L-citrulline + L-aspartate + ATP = 2-(N(omega)-L-arginino)succinate + AMP + diphosphate + H(+). It participates in amino-acid biosynthesis; L-arginine biosynthesis; L-arginine from L-ornithine and carbamoyl phosphate: step 2/3. This Lactiplantibacillus plantarum (strain ATCC BAA-793 / NCIMB 8826 / WCFS1) (Lactobacillus plantarum) protein is Argininosuccinate synthase.